Here is a 266-residue protein sequence, read N- to C-terminus: Putative carbamate hydrolase RutD (266 aa).

It belongs to the AB hydrolase superfamily. Hydrolase RutD family.

The catalysed reaction is carbamate + 2 H(+) = NH4(+) + CO2. Its function is as follows. Involved in pyrimidine catabolism. May facilitate the hydrolysis of carbamate, a reaction that can also occur spontaneously. The chain is Putative carbamate hydrolase RutD from Escherichia coli O7:K1 (strain IAI39 / ExPEC).